Consider the following 103-residue polypeptide: Small ribosomal subunit protein uS10 (103 aa).

This sequence belongs to the universal ribosomal protein uS10 family. Part of the 30S ribosomal subunit.

In terms of biological role, involved in the binding of tRNA to the ribosomes. The sequence is that of Small ribosomal subunit protein uS10 from Wigglesworthia glossinidia brevipalpis.